The following is a 132-amino-acid chain: Ribosome-binding factor A (132 aa).

It belongs to the RbfA family. As to quaternary structure, monomer. Binds 30S ribosomal subunits, but not 50S ribosomal subunits or 70S ribosomes.

It localises to the cytoplasm. In terms of biological role, one of several proteins that assist in the late maturation steps of the functional core of the 30S ribosomal subunit. Associates with free 30S ribosomal subunits (but not with 30S subunits that are part of 70S ribosomes or polysomes). Required for efficient processing of 16S rRNA. May interact with the 5'-terminal helix region of 16S rRNA. This chain is Ribosome-binding factor A, found in Teredinibacter turnerae (strain ATCC 39867 / T7901).